A 96-amino-acid polypeptide reads, in one-letter code: Co-chaperonin GroES (96 aa).

It belongs to the GroES chaperonin family. Heptamer of 7 subunits arranged in a ring. Interacts with the chaperonin GroEL.

The protein resides in the cytoplasm. Its function is as follows. Together with the chaperonin GroEL, plays an essential role in assisting protein folding. The GroEL-GroES system forms a nano-cage that allows encapsulation of the non-native substrate proteins and provides a physical environment optimized to promote and accelerate protein folding. GroES binds to the apical surface of the GroEL ring, thereby capping the opening of the GroEL channel. The polypeptide is Co-chaperonin GroES (Shewanella frigidimarina (strain NCIMB 400)).